Reading from the N-terminus, the 317-residue chain is MIVVDYITPLMESMKISAYYTIRISIIVLTTVFIVNYIMSTGIMKKLSNMLSPILRRLKVNPLSISSTLACFFSPTVGYSILAEGLKENKVNEREVIGASLANSFPSVLSHTFTFFIPVVVPILGHTGVLYVLIRLGVALAKTIIGFLYLSIISEDYSFEMPEINKLNKKENAKKSFKSTIRFAKRLIPIMFFMMTLVLYLSKIGFFDYVEKFVQPITNLLNLNPNVGILALTEIMNVQAAIVMAGGFLNEGILSSKEVLIGLIIGNVLTFSTRYVKHSLPLHVSLFGAKLGTKIVMVNAAITLLLDIFIIAGLLLI.

7 helical membrane passes run Ile24–Met44, Leu63–Ala83, Leu136–Asp156, Leu187–Phe207, Ile229–Leu249, Gly252–Ser272, and Ile295–Leu315.

This sequence to M.jannaschii MJ0880, MJ1556 and MJ1589.

Its subcellular location is the cell membrane. This is an uncharacterized protein from Methanocaldococcus jannaschii (strain ATCC 43067 / DSM 2661 / JAL-1 / JCM 10045 / NBRC 100440) (Methanococcus jannaschii).